The following is a 334-amino-acid chain: Fructose-1,6-bisphosphatase class 1 (334 aa).

Glu92, Asp114, Leu116, and Asp117 together coordinate Mg(2+). Substrate-binding positions include 117–120 and Asn209; that span reads DGSS. Glu281 serves as a coordination point for Mg(2+).

The protein belongs to the FBPase class 1 family. As to quaternary structure, homotetramer. It depends on Mg(2+) as a cofactor.

The protein resides in the cytoplasm. The enzyme catalyses beta-D-fructose 1,6-bisphosphate + H2O = beta-D-fructose 6-phosphate + phosphate. It functions in the pathway carbohydrate biosynthesis; gluconeogenesis. The protein is Fructose-1,6-bisphosphatase class 1 of Nitrosomonas eutropha (strain DSM 101675 / C91 / Nm57).